A 1009-amino-acid polypeptide reads, in one-letter code: Ulvan lyase, long isoform (1009 aa).

A signal peptide spans 1–32; it reads MTAQKSKYFNRIMTMNTLLFSLLTVGFSQAYA. 137–138 contacts substrate; sequence SH. His138 serves as the catalytic Proton donor/acceptor. 3 residues coordinate Ca(2+): Asp200, Asp210, and Lys212. Substrate contacts are provided by Tyr291 and Arg308. Asp311, Asp314, and Tyr316 together coordinate Ca(2+). Tyr372 is a binding site for substrate.

It belongs to the polysaccharide lyase 24 family.

Functionally, ulvan lyase involved in ulvan degradation. Ulvan is the main polysaccharide component of the Ulvales (green seaweed) cell wall. It is composed of disaccharide building blocks comprising 3-sulfated rhamnose (Rha3S) linked to D-glucuronic acid (GlcA), L-iduronic acid (IduA), or D-xylose (Xyl). Ulvan lyase catalyzes preferentially the endolytic cleavage of the glycosidic bond between Rha3S and the uronic acid GlcA, but not IduA, producing oligosaccharides that have unsaturated 4-deoxy-L-threo-hex-4-enopyranosiduronic acid (deltaUA) at the non-reducing end. The most abundant end products in the degradation of the ulvan polysaccharide were deltaUA-Rha3S disaccharides and deltaUA-Rha3S-IduA-Rha3S and deltaUA-Rha3S-Xyl-Rha3S tetrasaccharides. The polypeptide is Ulvan lyase, long isoform (ullA) (Glaciecola sp. (strain KUL10)).